We begin with the raw amino-acid sequence, 301 residues long: MSETKTYCGFIAIVGRPNVGKSTLLNKLLGQKISITSRKAQTTRHRIVGIHTEGEYQAIYVDTPGLHMEEKRAINRLMNKAASSSIGDVELVIFVVEGTRWTPDDEMVLNKLREGKAPVILAINKVDNVQDKAELLPHLQFLGSQMNFLDIVPISAETGMNVDTIAAIVRKHLPEAIHHFPEDYITDRSQRFMASEIIREKLMRFLGAELPYSVTVEIERFVTNERGGYDINGLILVEREGQKKMVIGNKGAKIKTIGIEARKDMQDMFEAPVHLELWVKVKSGWADDERALRSLGYVDDL.

The region spanning 7–175 is the Era-type G domain; sequence YCGFIAIVGR…AAIVRKHLPE (169 aa). Residues 15-22 form a G1 region; sequence GRPNVGKS. 15–22 lines the GTP pocket; the sequence is GRPNVGKS. A G2 region spans residues 41–45; that stretch reads QTTRH. The interval 62 to 65 is G3; it reads DTPG. GTP contacts are provided by residues 62 to 66 and 124 to 127; these read DTPGL and NKVD. Positions 124–127 are G4; that stretch reads NKVD. The G5 stretch occupies residues 154-156; it reads ISA. Residues 206–283 form the KH type-2 domain; the sequence is LGAELPYSVT…HLELWVKVKS (78 aa).

Belongs to the TRAFAC class TrmE-Era-EngA-EngB-Septin-like GTPase superfamily. Era GTPase family. In terms of assembly, monomer.

It localises to the cytoplasm. It is found in the cell inner membrane. Its function is as follows. An essential GTPase that binds both GDP and GTP, with rapid nucleotide exchange. Plays a role in 16S rRNA processing and 30S ribosomal subunit biogenesis and possibly also in cell cycle regulation and energy metabolism. This chain is GTPase Era, found in Cronobacter sakazakii (strain ATCC BAA-894) (Enterobacter sakazakii).